The primary structure comprises 364 residues: Delta(7)-sterol 5(6)-desaturase (364 aa).

A run of 3 helical transmembrane segments spans residues 94–114, 142–162, and 181–201; these read FFSLWAVVTVFGLLLYLITAS, LAVSAIPTMSLLTVPWFMLEL, and KLLIEYATFIFFTDCGIYLAH. One can recognise a Fatty acid hydroxylase domain in the interval 188–312; the sequence is TFIFFTDCGI…FTTLWDRLGG (125 aa). A Histidine box-1 motif is present at residues 201–205; it reads HRWLH. A Histidine box-2 motif is present at residues 214–218; sequence HKPHH. A helical membrane pass occupies residues 249–269; the sequence is ILPLHKISYLILFTFVNFWSV. The Histidine box-3 motif lies at 289–293; that stretch reads HTVHH.

This sequence belongs to the sterol desaturase family. Fe cation serves as cofactor.

The protein localises to the endoplasmic reticulum membrane. The catalysed reaction is a Delta(7)-sterol + 2 Fe(II)-[cytochrome b5] + O2 + 2 H(+) = a Delta(5),Delta(7)-sterol + 2 Fe(III)-[cytochrome b5] + 2 H2O. It functions in the pathway steroid metabolism; ergosterol biosynthesis; ergosterol from zymosterol: step 3/5. In terms of biological role, catalyzes the introduction of a C-5 double bond in the B ring of ergosterol. May contribute to the regulation of ergosterol biosynthesis. The chain is Delta(7)-sterol 5(6)-desaturase (ERG3) from Candida glabrata (strain ATCC 2001 / BCRC 20586 / JCM 3761 / NBRC 0622 / NRRL Y-65 / CBS 138) (Yeast).